Here is a 314-residue protein sequence, read N- to C-terminus: Lipid A biosynthesis acyltransferase 2 (314 aa).

The chain crosses the membrane as a helical span at residues 17–37 (LSPVYWFTWFVLGMIAGISMF). The HXXXXD motif motif lies at 137–142 (HGWSVD).

The protein belongs to the LpxL/LpxM/LpxP family. LpxM subfamily.

The protein localises to the cell inner membrane. The catalysed reaction is an alpha-Kdo-(2-&gt;4)-alpha-Kdo-(2-&gt;6)-(acyl)-lipid IVA + a fatty acyl-[ACP] = an alpha-Kdo-(2-&gt;4)-alpha-Kdo-(2-&gt;6)-lipid A + holo-[ACP]. It functions in the pathway glycolipid biosynthesis; KDO(2)-lipid A biosynthesis; KDO(2)-lipid A from CMP-3-deoxy-D-manno-octulosonate and lipid IV(A): step 4/4. Its pathway is bacterial outer membrane biogenesis; lipopolysaccharide biosynthesis. In terms of biological role, catalyzes the transfer of an acyl chain from an acyl-[acyl-carrier-protein] (ACP) to a Kdo(2)-(acyl)-lipid IV(A) to form a Kdo(2)-lipid A. This chain is Lipid A biosynthesis acyltransferase 2, found in Shigella flexneri.